A 239-amino-acid chain; its full sequence is Pyridoxine 5'-phosphate synthase (239 aa).

N7 is a binding site for 3-amino-2-oxopropyl phosphate. Position 9–10 (9–10 (DH)) interacts with 1-deoxy-D-xylulose 5-phosphate. Position 18 (R18) interacts with 3-amino-2-oxopropyl phosphate. The active-site Proton acceptor is the H43. 2 residues coordinate 1-deoxy-D-xylulose 5-phosphate: R45 and H50. The Proton acceptor role is filled by E70. Position 100 (T100) interacts with 1-deoxy-D-xylulose 5-phosphate. The Proton donor role is filled by H191. 3-amino-2-oxopropyl phosphate contacts are provided by residues G192 and 213-214 (GH).

This sequence belongs to the PNP synthase family. As to quaternary structure, homooctamer; tetramer of dimers.

It localises to the cytoplasm. It carries out the reaction 3-amino-2-oxopropyl phosphate + 1-deoxy-D-xylulose 5-phosphate = pyridoxine 5'-phosphate + phosphate + 2 H2O + H(+). The protein operates within cofactor biosynthesis; pyridoxine 5'-phosphate biosynthesis; pyridoxine 5'-phosphate from D-erythrose 4-phosphate: step 5/5. Its function is as follows. Catalyzes the complicated ring closure reaction between the two acyclic compounds 1-deoxy-D-xylulose-5-phosphate (DXP) and 3-amino-2-oxopropyl phosphate (1-amino-acetone-3-phosphate or AAP) to form pyridoxine 5'-phosphate (PNP) and inorganic phosphate. The sequence is that of Pyridoxine 5'-phosphate synthase from Geotalea uraniireducens (strain Rf4) (Geobacter uraniireducens).